Reading from the N-terminus, the 264-residue chain is 3'-5' ssDNA/RNA exonuclease TatD (264 aa).

3 residues coordinate a divalent metal cation: glutamate 92, histidine 128, and histidine 153.

Belongs to the metallo-dependent hydrolases superfamily. TatD-type hydrolase family. TatD subfamily. Monomer. It depends on Mg(2+) as a cofactor.

The protein resides in the cytoplasm. Its function is as follows. 3'-5' exonuclease that prefers single-stranded DNA and RNA. May play a role in the H(2)O(2)-induced DNA damage repair. In Dickeya dadantii (strain 3937) (Erwinia chrysanthemi (strain 3937)), this protein is 3'-5' ssDNA/RNA exonuclease TatD.